Reading from the N-terminus, the 120-residue chain is Large ribosomal subunit protein uL18 (120 aa).

Positions 1–29 (MITKPNKNAGRKKRHAHVRRTLSGTPQRP) are disordered. Over residues 9–20 (AGRKKRHAHVRR) the composition is skewed to basic residues.

Belongs to the universal ribosomal protein uL18 family. Part of the 50S ribosomal subunit; part of the 5S rRNA/L5/L18/L25 subcomplex. Contacts the 5S and 23S rRNAs.

Functionally, this is one of the proteins that bind and probably mediate the attachment of the 5S RNA into the large ribosomal subunit, where it forms part of the central protuberance. The sequence is that of Large ribosomal subunit protein uL18 from Shouchella clausii (strain KSM-K16) (Alkalihalobacillus clausii).